The sequence spans 243 residues: uncharacterized protein (243 aa).

This is an uncharacterized protein from Caenorhabditis elegans.